We begin with the raw amino-acid sequence, 363 residues long: Probable iron/ascorbate oxidoreductase DDB_G0283291 (363 aa).

Residues 197 to 306 (IFNYPSIISS…RISFPLFFDP (110 aa)) form the Fe2OG dioxygenase domain. H230, D232, and H286 together coordinate Fe cation. A 2-oxoglutarate-binding site is contributed by R297.

Belongs to the iron/ascorbate-dependent oxidoreductase family. It depends on Fe(2+) as a cofactor.

The protein is Probable iron/ascorbate oxidoreductase DDB_G0283291 of Dictyostelium discoideum (Social amoeba).